We begin with the raw amino-acid sequence, 391 residues long: MAPAMDSAQNGHQSRGSANVLAIGTANPPNVILQEDYPDFYFKVTNSEHLTDLKEKFKRICVKSKTRKRHFYLTEQILKENPGIATYGAGSLDSRQKILETEIPKLGKEAAMVAIQEWGQPVSKITHVVFATTSGFMMPGADYSITRLLGLNPNVRRVMIYNQGCFAGGTALRVAKDLAENNKGARVLVVCAENTAMTFHGPNENHLDVLVGQAMFSDGAAALIIGANPNLPEERPVYEMVAAHQTIVPESDGAIVAHFYEMGMSYFLKENVIPLFGNNIEACMEAAFKEYGISDWNSLFYSVHPGGRAIVDGIAEKLGLDEENLKATRHVLSEYGNMGSACVIFILDELRKKSKEEKKLTTGDGKEWGCLIGLGPGLTVETVVLRSVPIA.

Cysteine 165 is a catalytic residue.

The protein belongs to the thiolase-like superfamily. Chalcone/stilbene synthases family. Homodimer. As to expression, expressed in young fruit pericarp.

The catalysed reaction is benzoyl-CoA + 3 malonyl-CoA + 2 H(+) = 2,4,6-trihydroxybenzophenone + 3 CO2 + 4 CoA. In terms of biological role, type III polyketide synthase involved in the biosynthesis of benzophenones and xanthones. Produces mainly 2,4,6-trihydroxybenzophenone together with minor amounts of tetraketide lactone, triketide lactone and diketide lactone. The preferred substrate is benzoyl-CoA, but can also use acetyl-CoA, phenylacetyl-CoA, hexanoyl-CoA, cinnamoyl-CoA, p-coumaroyl-CoA and salicoyl-CoA. The sequence is that of 2,4,6-trihydroxybenzophenone synthase (BPS) from Garcinia mangostana (Mangosteen).